Reading from the N-terminus, the 128-residue chain is Small ribosomal subunit protein uS11 (128 aa).

It belongs to the universal ribosomal protein uS11 family. As to quaternary structure, part of the 30S ribosomal subunit. Interacts with proteins S7 and S18. Binds to IF-3.

Located on the platform of the 30S subunit, it bridges several disparate RNA helices of the 16S rRNA. Forms part of the Shine-Dalgarno cleft in the 70S ribosome. The chain is Small ribosomal subunit protein uS11 from Wolbachia pipientis subsp. Culex pipiens (strain wPip).